The sequence spans 111 residues: MKFSTTLLALTASIAAVMSADSSAAASGAASAASGAKSGATSAASGAKSGASSVASAAKSGVSSAASAAKSGASSATGGSSAAKSGSSSGAGFAPVAGAGSLAAIAGLLLL.

The signal sequence occupies residues 1-19 (MKFSTTLLALTASIAAVMS). A disordered region spans residues 71–90 (SGASSATGGSSAAKSGSSSG). The GPI-anchor amidated serine moiety is linked to residue serine 81. Residues 82-111 (AAKSGSSSGAGFAPVAGAGSLAAIAGLLLL) constitute a propeptide, removed in mature form.

The GPI-anchor is attached to the protein in the endoplasmic reticulum and serves to target the protein to the cell surface. There, the glucosamine-inositol phospholipid moiety is cleaved off and the GPI-modified mannoprotein is covalently attached via its lipidless GPI glycan remnant to the 1,6-beta-glucan of the outer cell wall layer.

It is found in the secreted. The protein resides in the cell wall. It localises to the membrane. Probable cell wall protein required for filamentation at low pH. This chain is Repressed By RIM101 protein 1 (RBR1), found in Candida albicans (strain SC5314 / ATCC MYA-2876) (Yeast).